A 257-amino-acid chain; its full sequence is Imidazole glycerol phosphate synthase subunit HisF (257 aa).

Active-site residues include Asp12 and Asp131.

The protein belongs to the HisA/HisF family. As to quaternary structure, heterodimer of HisH and HisF.

It is found in the cytoplasm. The enzyme catalyses 5-[(5-phospho-1-deoxy-D-ribulos-1-ylimino)methylamino]-1-(5-phospho-beta-D-ribosyl)imidazole-4-carboxamide + L-glutamine = D-erythro-1-(imidazol-4-yl)glycerol 3-phosphate + 5-amino-1-(5-phospho-beta-D-ribosyl)imidazole-4-carboxamide + L-glutamate + H(+). The protein operates within amino-acid biosynthesis; L-histidine biosynthesis; L-histidine from 5-phospho-alpha-D-ribose 1-diphosphate: step 5/9. IGPS catalyzes the conversion of PRFAR and glutamine to IGP, AICAR and glutamate. The HisF subunit catalyzes the cyclization activity that produces IGP and AICAR from PRFAR using the ammonia provided by the HisH subunit. This is Imidazole glycerol phosphate synthase subunit HisF from Burkholderia vietnamiensis (strain G4 / LMG 22486) (Burkholderia cepacia (strain R1808)).